Here is a 301-residue protein sequence, read N- to C-terminus: 4-hydroxy-tetrahydrodipicolinate synthase (301 aa).

Residue T50 coordinates pyruvate. Y138 (proton donor/acceptor) is an active-site residue. The active-site Schiff-base intermediate with substrate is K167. I209 provides a ligand contact to pyruvate.

The protein belongs to the DapA family. In terms of assembly, homotetramer; dimer of dimers.

Its subcellular location is the cytoplasm. It catalyses the reaction L-aspartate 4-semialdehyde + pyruvate = (2S,4S)-4-hydroxy-2,3,4,5-tetrahydrodipicolinate + H2O + H(+). The protein operates within amino-acid biosynthesis; L-lysine biosynthesis via DAP pathway; (S)-tetrahydrodipicolinate from L-aspartate: step 3/4. Catalyzes the condensation of (S)-aspartate-beta-semialdehyde [(S)-ASA] and pyruvate to 4-hydroxy-tetrahydrodipicolinate (HTPA). The protein is 4-hydroxy-tetrahydrodipicolinate synthase of Sorangium cellulosum (strain So ce56) (Polyangium cellulosum (strain So ce56)).